The sequence spans 447 residues: UDP-N-acetylmuramate--L-alanine ligase (447 aa).

108–114 is a binding site for ATP; it reads GSHGKTS.

Belongs to the MurCDEF family.

It localises to the cytoplasm. It catalyses the reaction UDP-N-acetyl-alpha-D-muramate + L-alanine + ATP = UDP-N-acetyl-alpha-D-muramoyl-L-alanine + ADP + phosphate + H(+). Its pathway is cell wall biogenesis; peptidoglycan biosynthesis. In terms of biological role, cell wall formation. In Listeria monocytogenes serovar 1/2a (strain ATCC BAA-679 / EGD-e), this protein is UDP-N-acetylmuramate--L-alanine ligase.